The chain runs to 872 residues: Probable LRR receptor-like serine/threonine-protein kinase At1g51880 (872 aa).

Residues 1 to 23 (MKSIHGFLLFLITAYVILESVQA) form the signal peptide. Residues 24–513 (QDQLGFISLD…GKSKKVPMIP (490 aa)) lie on the Extracellular side of the membrane. Asparagine 40, asparagine 49, asparagine 96, asparagine 181, asparagine 255, asparagine 268, asparagine 294, asparagine 339, and asparagine 401 each carry an N-linked (GlcNAc...) asparagine glycan. LRR repeat units follow at residues 411-434 (RIIS…SKLT), 435-457 (QLIE…FADM), and 459-482 (LLKL…IQQR). Residues asparagine 464 and asparagine 472 are each glycosylated (N-linked (GlcNAc...) asparagine). Residues 514-534 (IVASVAGVFALLVILAIFFVV) traverse the membrane as a helical segment. The Cytoplasmic portion of the chain corresponds to 535–872 (RRKNGESNKG…SASEFSPGAR (338 aa)). At threonine 557 the chain carries Phosphothreonine. Residues 566–838 (NNFERVLGKG…HVVTELNECV (273 aa)) form the Protein kinase domain. ATP-binding positions include 572 to 580 (LGKGGFGTV) and lysine 593. The residue at position 638 (tyrosine 638) is a Phosphotyrosine. Residue aspartate 690 is the Proton acceptor of the active site. Residue serine 724 is modified to Phosphoserine. A phosphothreonine mark is found at threonine 725 and threonine 730. Tyrosine 738 is modified (phosphotyrosine).

This sequence belongs to the protein kinase superfamily. Ser/Thr protein kinase family.

Its subcellular location is the membrane. It carries out the reaction L-seryl-[protein] + ATP = O-phospho-L-seryl-[protein] + ADP + H(+). It catalyses the reaction L-threonyl-[protein] + ATP = O-phospho-L-threonyl-[protein] + ADP + H(+). The protein is Probable LRR receptor-like serine/threonine-protein kinase At1g51880 of Arabidopsis thaliana (Mouse-ear cress).